We begin with the raw amino-acid sequence, 75 residues long: uncharacterized protein (75 aa).

The tract at residues 1 to 23 (MADAMDLAQLREQEDRERHISNA) is disordered. The segment covering 9–20 (QLREQEDRERHI) has biased composition (basic and acidic residues). A dksA C4-type zinc finger spans residues 35–59 (CEECDAPIPEARRRAIPGVQCCVTC).

This is an uncharacterized protein from Escherichia phage 186 (Bacteriophage 186).